The primary structure comprises 392 residues: S-adenosylmethionine synthase (392 aa).

Position 22 (His-22) interacts with ATP. Residue Asp-24 coordinates Mg(2+). Glu-50 serves as a coordination point for K(+). Residues Glu-63 and Gln-106 each coordinate L-methionine. The tract at residues 106 to 116 is flexible loop; the sequence is QSPDITQGVTL. Residues 170 to 172, 236 to 237, Asp-245, 251 to 252, Ala-268, and Lys-272 contribute to the ATP site; these read DGK, KF, and RK. Asp-245 contacts L-methionine. Lys-276 is an L-methionine binding site.

The protein belongs to the AdoMet synthase family. As to quaternary structure, homotetramer; dimer of dimers. The cofactor is Mg(2+). It depends on K(+) as a cofactor.

Its subcellular location is the cytoplasm. It catalyses the reaction L-methionine + ATP + H2O = S-adenosyl-L-methionine + phosphate + diphosphate. Its pathway is amino-acid biosynthesis; S-adenosyl-L-methionine biosynthesis; S-adenosyl-L-methionine from L-methionine: step 1/1. Catalyzes the formation of S-adenosylmethionine (AdoMet) from methionine and ATP. The overall synthetic reaction is composed of two sequential steps, AdoMet formation and the subsequent tripolyphosphate hydrolysis which occurs prior to release of AdoMet from the enzyme. The chain is S-adenosylmethionine synthase from Sulfurimonas denitrificans (strain ATCC 33889 / DSM 1251) (Thiomicrospira denitrificans (strain ATCC 33889 / DSM 1251)).